Consider the following 124-residue polypeptide: Ribosome-binding factor A (124 aa).

The protein belongs to the RbfA family. Monomer. Binds 30S ribosomal subunits, but not 50S ribosomal subunits or 70S ribosomes.

The protein resides in the cytoplasm. In terms of biological role, one of several proteins that assist in the late maturation steps of the functional core of the 30S ribosomal subunit. Associates with free 30S ribosomal subunits (but not with 30S subunits that are part of 70S ribosomes or polysomes). Required for efficient processing of 16S rRNA. May interact with the 5'-terminal helix region of 16S rRNA. This is Ribosome-binding factor A from Sorangium cellulosum (strain So ce56) (Polyangium cellulosum (strain So ce56)).